Reading from the N-terminus, the 535-residue chain is Signal transduction histidine-protein kinase AfsQ2 (535 aa).

Residues 1–30 (MTREHQGGTRGLAAARKGFWSGLRFTSLRL) are Cytoplasmic-facing. Residues 31–52 (RLVLVFGLVALTAAVSASGIAY) traverse the membrane as a helical segment. Topologically, residues 53-198 (WLNREAVLTR…SLEPEAKDLN (146 aa)) are extracellular. The chain crosses the membrane as a helical span at residues 199–219 (SLAWSLGIATALALLGSALLA). Residues 220-535 (QALATTVLKP…DRGKDAKGQV (316 aa)) are Cytoplasmic-facing. The 53-residue stretch at 224–276 (TTVLKPVHRLGVAARRLGEGKLDTRLRVSGTDELADLSRTFNSAAENLEKRVA) folds into the HAMP domain. A Histidine kinase domain is found at 291 to 510 (DMSHELRTPL…VFTLRLPQDP (220 aa)). His-294 carries the post-translational modification Phosphohistidine. The interval 493 to 535 (ENAPEGGAVFTLRLPQDPSPPADEDGGPDEETEDRGKDAKGQV) is disordered. Positions 514 to 525 (ADEDGGPDEETE) are enriched in acidic residues. A compositionally biased stretch (basic and acidic residues) spans 526 to 535 (DRGKDAKGQV).

It is found in the cell membrane. It carries out the reaction ATP + protein L-histidine = ADP + protein N-phospho-L-histidine.. Forms part of a two-component regulatory system AfsQ1/AfsQ2 involved in secondary metabolism. May activate AfsQ1 by phosphorylation. This Streptomyces coelicolor (strain ATCC BAA-471 / A3(2) / M145) protein is Signal transduction histidine-protein kinase AfsQ2 (afsQ2).